The sequence spans 512 residues: MVPTGQVAEKQACEEPRQDRELKSWRWLVFYLCFFGFMAQLRPGESFITPYLLERNFTKEQVTNEIIPMLPYSHLAVLVPIFLLTDYLRYKPVLVLQCLSFVCVWLLLLLGTSVVHMQLMEVFYSITMAARIAYSSYIFSLVQPSRYQRMASYSRAAVLLGVFISSVLGQVLVTLGGISTYMLNCISLGFILFSLSLSLFLKRPKRSLFFNRSALVQGALPCELDQMHPGPGRPEPRKLERMLGTCRDSFLVRMLSELVKNVRQPQLRLWCLWWVFNSAGYYLITYYVHVLWKITDSRLNYNGAVDAASTLLSAITAFTAGFVNIRWALWSKLVIASVIAIQAGLVFCMFQIPDIWVCYVTFVLFRGAYQFLVPIATFQIASSLSKELCALVFGINTFLATALKTSITLVVSDKRGLGLQVHQQFRIYFMYFLTLSIICLAWAGLDGLRYYRRGRHQPLAQAQALSPLEDSVQAISLQDGDLRRPQPSAPQLLPEDGSVEDGRADLRVEAKA.

M1 bears the N-acetylmethionine mark. Residues 1-29 (MVPTGQVAEKQACEEPRQDRELKSWRWLV) lie on the Cytoplasmic side of the membrane. Residues 30–50 (FYLCFFGFMAQLRPGESFITP) traverse the membrane as a helical segment. Folate is bound by residues I48 and T49. Residues 51–62 (YLLERNFTKEQV) are Extracellular-facing. Residue N56 is glycosylated (N-linked (GlcNAc...) asparagine). The chain crosses the membrane as a helical span at residues 63 to 85 (TNEIIPMLPYSHLAVLVPIFLLT). Over 86–89 (DYLR) the chain is Cytoplasmic. The helical transmembrane segment at 90-110 (YKPVLVLQCLSFVCVWLLLLL) threads the bilayer. Residues 111-114 (GTSV) lie on the Extracellular side of the membrane. The helical transmembrane segment at 115–137 (VHMQLMEVFYSITMAARIAYSSY) threads the bilayer. Residues E121 and R131 each coordinate folate. At 138–151 (IFSLVQPSRYQRMA) the chain is on the cytoplasmic side. A helical membrane pass occupies residues 152 to 176 (SYSRAAVLLGVFISSVLGQVLVTLG). V162 is a binding site for folate. Topologically, residues 177–181 (GISTY) are extracellular. The helical transmembrane segment at 182–200 (MLNCISLGFILFSLSLSLF) threads the bilayer. Residues 201 to 266 (LKRPKRSLFF…ELVKNVRQPQ (66 aa)) are Cytoplasmic-facing. The chain crosses the membrane as a helical span at residues 267–292 (LRLWCLWWVFNSAGYYLITYYVHVLW). Y281, Y282, and Y286 together coordinate folate. At 293-300 (KITDSRLN) the chain is on the extracellular side. The helical transmembrane segment at 301–323 (YNGAVDAASTLLSAITAFTAGFV) threads the bilayer. The Cytoplasmic portion of the chain corresponds to 324–329 (NIRWAL). The helical transmembrane segment at 330 to 350 (WSKLVIASVIAIQAGLVFCMF) threads the bilayer. Residues 351-353 (QIP) are Extracellular-facing. A helical membrane pass occupies residues 354-377 (DIWVCYVTFVLFRGAYQFLVPIAT). Folate contacts are provided by R366 and Q370. Over 378–391 (FQIASSLSKELCAL) the chain is Cytoplasmic. The chain crosses the membrane as a helical span at residues 392-415 (VFGINTFLATALKTSITLVVSDKR). The segment at 400–412 (ATALKTSITLVVS) is required for substrate-binding. Topologically, residues 416-423 (GLGLQVHQ) are extracellular. A helical membrane pass occupies residues 424–448 (QFRIYFMYFLTLSIICLAWAGLDGL). Over 449 to 512 (RYYRRGRHQP…RADLRVEAKA (64 aa)) the chain is Cytoplasmic. Phosphoserine occurs at positions 466, 471, and 476. The disordered stretch occupies residues 479-512 (DGDLRRPQPSAPQLLPEDGSVEDGRADLRVEAKA). Positions 500–512 (EDGRADLRVEAKA) are enriched in basic and acidic residues.

This sequence belongs to the reduced folate carrier (RFC) transporter (TC 2.A.48) family. Expressed in liver, heart, brain, spleen, lung and skeletal muscle.

It is found in the cell membrane. The protein localises to the apical cell membrane. It localises to the basolateral cell membrane. The enzyme catalyses 5-amino-1-(5-phospho-beta-D-ribosyl)imidazole-4-carboxamide(in) + (6S)-5-methyl-5,6,7,8-tetrahydrofolate(out) = 5-amino-1-(5-phospho-beta-D-ribosyl)imidazole-4-carboxamide(out) + (6S)-5-methyl-5,6,7,8-tetrahydrofolate(in). In terms of biological role, antiporter that mediates the import of reduced folates, driven by the export of organic anions. Also acts as an importer of immunoreactive cyclic dinucleotides, but with a lower transporter activity. Mechanistically, acts as a secondary active transporter, which exports intracellular organic anions down their concentration gradients to facilitate the uptake of its substrates. Has high affinity for N5-methyltetrahydrofolate, the predominant circulating form of folate. Also mediates the import of antifolate drug methotrexate. 5-amino-4-imidazolecarboxamide riboside (AICAR), when phosphorylated to AICAR monophosphate, can serve as an organic anion for antiporter activity. The sequence is that of Reduced folate transporter from Rattus norvegicus (Rat).